A 102-amino-acid chain; its full sequence is Large ribosomal subunit protein uL24 (102 aa).

Belongs to the universal ribosomal protein uL24 family. In terms of assembly, part of the 50S ribosomal subunit.

Its function is as follows. One of two assembly initiator proteins, it binds directly to the 5'-end of the 23S rRNA, where it nucleates assembly of the 50S subunit. Functionally, one of the proteins that surrounds the polypeptide exit tunnel on the outside of the subunit. The chain is Large ribosomal subunit protein uL24 from Paraburkholderia xenovorans (strain LB400).